Reading from the N-terminus, the 417-residue chain is Probable sugar-binding periplasmic protein (417 aa).

An N-terminal signal peptide occupies residues 1–21; sequence MLRKLLIGTALATSFAFSAHA.

It belongs to the bacterial solute-binding protein 1 family.

Its subcellular location is the periplasm. Functionally, part of a binding-protein-dependent transport system for a sugar. The sequence is that of Probable sugar-binding periplasmic protein from Mesorhizobium japonicum (strain LMG 29417 / CECT 9101 / MAFF 303099) (Mesorhizobium loti (strain MAFF 303099)).